The primary structure comprises 532 residues: IQ domain-containing protein IQM4 (532 aa).

2 disordered regions span residues serine 47–glutamate 67 and proline 85–leucine 104. A compositionally biased stretch (basic and acidic residues) spans asparagine 56–methionine 66. Residues proline 85–valine 94 are compositionally biased toward acidic residues. Residues leucine 136–glutamate 165 enclose the IQ domain. Disordered stretches follow at residues serine 410–glutamate 443 and proline 487–arginine 513. The segment covering proline 487–phenylalanine 496 has biased composition (polar residues). Pro residues predominate over residues proline 499–serine 509.

In terms of tissue distribution, expressed in roots, cauline leaves and flowers, and at lower levels in rosette leaves, stems and siliques.

The protein localises to the cytoplasm. It localises to the nucleus. Functionally, may be involved in biotic and abiotic stress responses. This Arabidopsis thaliana (Mouse-ear cress) protein is IQ domain-containing protein IQM4.